Consider the following 142-residue polypeptide: Transcription antitermination protein NusB (142 aa).

Belongs to the NusB family.

Functionally, involved in transcription antitermination. Required for transcription of ribosomal RNA (rRNA) genes. Binds specifically to the boxA antiterminator sequence of the ribosomal RNA (rrn) operons. The polypeptide is Transcription antitermination protein NusB (Levilactobacillus brevis (strain ATCC 367 / BCRC 12310 / CIP 105137 / JCM 1170 / LMG 11437 / NCIMB 947 / NCTC 947) (Lactobacillus brevis)).